Consider the following 233-residue polypeptide: 5'-methylthioadenosine/S-adenosylhomocysteine nucleosidase (233 aa).

The active-site Proton acceptor is the E12. Residues G78, I156, and 177–178 contribute to the substrate site; that span reads ME. The active-site Proton donor is the D201.

It belongs to the PNP/UDP phosphorylase family. MtnN subfamily.

It catalyses the reaction S-adenosyl-L-homocysteine + H2O = S-(5-deoxy-D-ribos-5-yl)-L-homocysteine + adenine. The enzyme catalyses S-methyl-5'-thioadenosine + H2O = 5-(methylsulfanyl)-D-ribose + adenine. It carries out the reaction 5'-deoxyadenosine + H2O = 5-deoxy-D-ribose + adenine. It participates in amino-acid biosynthesis; L-methionine biosynthesis via salvage pathway; S-methyl-5-thio-alpha-D-ribose 1-phosphate from S-methyl-5'-thioadenosine (hydrolase route): step 1/2. In terms of biological role, catalyzes the irreversible cleavage of the glycosidic bond in both 5'-methylthioadenosine (MTA) and S-adenosylhomocysteine (SAH/AdoHcy) to adenine and the corresponding thioribose, 5'-methylthioribose and S-ribosylhomocysteine, respectively. Also cleaves 5'-deoxyadenosine, a toxic by-product of radical S-adenosylmethionine (SAM) enzymes, into 5-deoxyribose and adenine. This Listeria monocytogenes serotype 4b (strain F2365) protein is 5'-methylthioadenosine/S-adenosylhomocysteine nucleosidase.